An 82-amino-acid chain; its full sequence is RNA-binding protein Hfq (82 aa).

A Sm domain is found at Asp-11 to Ile-71.

This sequence belongs to the Hfq family. In terms of assembly, homohexamer.

Functionally, RNA chaperone that binds small regulatory RNA (sRNAs) and mRNAs to facilitate mRNA translational regulation in response to envelope stress, environmental stress and changes in metabolite concentrations. Also binds with high specificity to tRNAs. The sequence is that of RNA-binding protein Hfq from Bradyrhizobium sp. (strain BTAi1 / ATCC BAA-1182).